A 186-amino-acid polypeptide reads, in one-letter code: Ribosome-recycling factor (186 aa).

The protein belongs to the RRF family.

It is found in the cytoplasm. Responsible for the release of ribosomes from messenger RNA at the termination of protein biosynthesis. May increase the efficiency of translation by recycling ribosomes from one round of translation to another. The protein is Ribosome-recycling factor of Coprothermobacter proteolyticus (strain ATCC 35245 / DSM 5265 / OCM 4 / BT).